A 138-amino-acid polypeptide reads, in one-letter code: SPbeta prophage-derived uncharacterized protein YopJ (138 aa).

This chain is SPbeta prophage-derived uncharacterized protein YopJ (yopJ), found in Bacillus subtilis (strain 168).